The primary structure comprises 123 residues: Ig heavy chain V region HPCG13 (123 aa).

The 114-residue stretch at 1–114 folds into the Ig-like domain; that stretch reads EVKLVESGGG…GSYWYFDVWG (114 aa).

This Mus musculus (Mouse) protein is Ig heavy chain V region HPCG13.